The primary structure comprises 470 residues: MAEDKIEAYNKSITRTKYFKMDDAINSPICSKTVFIIANERITKENRIGRYYTVFPSFKKFLKKRDSYPQCHEIIIDHINNKTNIAGRLVFDFDIKITDSSILKDTGLIDKNDNQPIMFNSKTLSITKIPLNFKQQIENTIIETIDQYFHDIDKTILEFIWSTSQNPNKFSKHLTVKNLYFDDWITMSKLFYKLFCKVWDNQYYWISSKDLVDSQIVRNKGSLRMVGSTKINGYPLVFDNKNHTLPDSLIRIYFRNHREKEQLVTRNNINKDIINQFLESNDDIEHHRSIDIIDRHFTKIRNPSYDPIIYQKAFEIYDAIHPNIFKMGKVNGKYLTLIRLKPHTCFLSNKFHEQENAYLYISMSDTTYKISFGCYRFCSKKKMEYLGSLIQGNLMKNSPYIDDTDGTTKKHDFNINIKFLSDSDDESINAPNNIKSLESIKSSKSKKQLKSSKSKKPIKHTKTKNIYVET.

The interval 439-470 (SIKSSKSKKQLKSSKSKKPIKHTKTKNIYVET) is disordered. A compositionally biased stretch (basic residues) spans 443–463 (SKSKKQLKSSKSKKPIKHTKT).

This is an uncharacterized protein from Acanthamoeba polyphaga mimivirus (APMV).